A 233-amino-acid chain; its full sequence is Delta-actitoxin-Amc1a (233 aa).

Residues 1 to 18 (MKRIFIVALLFATCLVNA) form the signal peptide. Propeptides lie at residues 19 to 29 (KPSINDADIKR) and 30 to 33 (EPEP). Pro-39 is subject to Hydroxyproline. Cystine bridges form between Cys-40/Cys-51 and Cys-43/Cys-58. Propeptides lie at residues 61-63 (RKR) and 64-67 (EPEP). Hydroxyproline is present on Pro-73. Intrachain disulfides connect Cys-74-Cys-85 and Cys-77-Cys-92. 2 propeptides span residues 95 to 97 (RKR) and 98 to 101 (EPEP). Residue Pro-107 is modified to Hydroxyproline. Disulfide bonds link Cys-108–Cys-119 and Cys-111–Cys-126. 2 consecutive propeptides follow at residues 129–131 (RKR) and 132–135 (EPEP). Pro-141 is subject to Hydroxyproline. 2 disulfides stabilise this stretch: Cys-142–Cys-153 and Cys-145–Cys-160. 2 propeptides span residues 163-165 (RKR) and 166-169 (EPEP). Pro-175 carries the hydroxyproline modification. Disulfide bonds link Cys-176-Cys-187 and Cys-179-Cys-194. 2 propeptides span residues 197-199 (RKR) and 200-203 (EPEP). Hydroxyproline is present on Pro-209. 2 disulfide bridges follow: Cys-210–Cys-221 and Cys-213–Cys-228. The propeptide occupies 231–233 (RKR).

Belongs to the sea anemone BBH family. In terms of processing, each Am I peptide may contain 2 disulfide bonds. Post-translationally, the precursor protein seems to be processed in the following sequence: release of the signal peptide and of the propeptide, production of six identical 34-residue peptides by cleavage between Arg and Glu, release of four N-terminal and three C-terminal residues from each peptide and hydroxylation of each Pro in position 6 of the resulting 27-residue peptides.

Its subcellular location is the secreted. The protein resides in the nematocyst. Its function is as follows. May inhibit voltage-gated sodium channels (Nav). The chain is Delta-actitoxin-Amc1a from Antheopsis maculata (Sea anemone).